Consider the following 193-residue polypeptide: Orotate phosphoribosyltransferase (193 aa).

5-phospho-alpha-D-ribose 1-diphosphate is bound by residues R107, K108, K111, H113, and 133–141 (EDVITSGGS). Orotate-binding residues include T137 and R165.

This sequence belongs to the purine/pyrimidine phosphoribosyltransferase family. PyrE subfamily. Homodimer. Mg(2+) serves as cofactor.

It carries out the reaction orotidine 5'-phosphate + diphosphate = orotate + 5-phospho-alpha-D-ribose 1-diphosphate. Its pathway is pyrimidine metabolism; UMP biosynthesis via de novo pathway; UMP from orotate: step 1/2. In terms of biological role, catalyzes the transfer of a ribosyl phosphate group from 5-phosphoribose 1-diphosphate to orotate, leading to the formation of orotidine monophosphate (OMP). In Rhodopirellula baltica (strain DSM 10527 / NCIMB 13988 / SH1), this protein is Orotate phosphoribosyltransferase.